Reading from the N-terminus, the 227-residue chain is Trypsin (227 aa).

The Peptidase S1 domain maps to 1 to 223; it reads IVGGEDANVQ…YYDVLMEQIN (223 aa). An intrachain disulfide couples C27 to C43. Catalysis depends on charge relay system residues H42 and D88. Intrachain disulfides connect C150/C164 and C175/C199. S179 acts as the Charge relay system in catalysis.

This sequence belongs to the peptidase S1 family.

It carries out the reaction Preferential cleavage: Arg-|-Xaa, Lys-|-Xaa.. This Saccharopolyspora erythraea (Streptomyces erythraeus) protein is Trypsin.